Consider the following 99-residue polypeptide: Small ribosomal subunit protein uS14m (99 aa).

Belongs to the universal ribosomal protein uS14 family.

The protein localises to the mitochondrion. The protein is Small ribosomal subunit protein uS14m (RPS14) of Prototheca wickerhamii.